Here is a 100-residue protein sequence, read N- to C-terminus: Urease subunit gamma (100 aa).

It belongs to the urease gamma subunit family. In terms of assembly, heterotrimer of UreA (gamma), UreB (beta) and UreC (alpha) subunits. Three heterotrimers associate to form the active enzyme.

The protein resides in the cytoplasm. The enzyme catalyses urea + 2 H2O + H(+) = hydrogencarbonate + 2 NH4(+). Its pathway is nitrogen metabolism; urea degradation; CO(2) and NH(3) from urea (urease route): step 1/1. The chain is Urease subunit gamma from Nocardia farcinica (strain IFM 10152).